The following is a 356-amino-acid chain: DNA polymerase IV (356 aa).

Positions 6-187 (IIHIDMDYFF…LDIGDFPGVG (182 aa)) constitute a UmuC domain. 2 residues coordinate Mg(2+): aspartate 10 and aspartate 105. Glutamate 106 is an active-site residue.

It belongs to the DNA polymerase type-Y family. As to quaternary structure, monomer. Requires Mg(2+) as cofactor.

The protein localises to the cytoplasm. The enzyme catalyses DNA(n) + a 2'-deoxyribonucleoside 5'-triphosphate = DNA(n+1) + diphosphate. Poorly processive, error-prone DNA polymerase involved in untargeted mutagenesis. Copies undamaged DNA at stalled replication forks, which arise in vivo from mismatched or misaligned primer ends. These misaligned primers can be extended by PolIV. Exhibits no 3'-5' exonuclease (proofreading) activity. May be involved in translesional synthesis, in conjunction with the beta clamp from PolIII. This is DNA polymerase IV from Staphylococcus aureus (strain COL).